The chain runs to 182 residues: Neuropeptide CCHamide-1 (182 aa).

Residues 1–22 (MWYSKCSWTLVVLVALFALVTG) form the signal peptide. A disulfide bridge connects residues C24 and C31. H35 is subject to Histidine amide. Positions 39-182 (SGGKAVIDAK…ENYSGYELTK (144 aa)) are excised as a propeptide. Disordered regions lie at residues 67-103 (NNNNNNQNNQDDDNNDDDSNRNTNANSANNIPLAAPA) and 133-154 (QLQDQQQQGRGRGGQGQYDAAA). Positions 87 to 103 (RNTNANSANNIPLAAPA) are enriched in low complexity. N174 is a glycosylation site (N-linked (GlcNAc...) asparagine).

As to expression, expressed in endocrine cells of the larval midgut (at protein level). In the brain, expressed in the optic lobes, lateral protocerebrum, subesophageal ganglion, and intermediate and superior medial protocerebrum (at protein level). Expressed in DN1a neurons but not in other clock neurons and expression follows a rhythmic pattern controlled by the circadian clock (at protein level). In the posterior midgut, expressed in enteroendocrine cells (at protein level). Low levels in larval brain with higher levels in larval and adult gut and adult brain.

The protein resides in the secreted. Its function is as follows. Neuropeptide ligand for the CCHamide-1 receptor CCHa1-R. Neuromessenger mediating signaling between neuronal cells of the circadian clock network involved in regulation of sleep latency (the time required to fall asleep), amount of sleep and depth of sleep (arousability). Together with PDF, involved in regulating intensity and periodicity of daytime activity. In subsets of clock neurons modulates the rhythmic expression of PDP1 and PDF, and together with PDF modulates the rhythmic expression of circadian protein PER/period, but not TIM/timeless. Mediates signaling from DN1a (anterior dorsal neurons 1) clock neurons to s-LNv (small ventral lateral neurons) clock neurons through CCHa1-R, contributing to regulation of activity rhythms by the circadian clock, particularly in the morning. May be involved in signaling between clock neurons and non-clock neurons, such as the fan-shaped body, involved in sleep homeostasis. In response to a high protein diet mediates hormonal signaling between the gut and a CCHa1-R expressing subset of dopaminergic cells in the protocerebral anterior medial (PAM) cluster of the brain. This suppresses arousability by mechano-sensory stimulation (but not thermal stimulation) but is not involved in regulation of sleep patterns. This Drosophila melanogaster (Fruit fly) protein is Neuropeptide CCHamide-1.